Consider the following 122-residue polypeptide: Large ribosomal subunit protein uL18 (122 aa).

This sequence belongs to the universal ribosomal protein uL18 family. Part of the 50S ribosomal subunit; part of the 5S rRNA/L5/L18/L25 subcomplex. Contacts the 5S and 23S rRNAs.

This is one of the proteins that bind and probably mediate the attachment of the 5S RNA into the large ribosomal subunit, where it forms part of the central protuberance. The protein is Large ribosomal subunit protein uL18 of Kosmotoga olearia (strain ATCC BAA-1733 / DSM 21960 / TBF 19.5.1).